The sequence spans 516 residues: Adenine DNA glycosylase (516 aa).

Positions 1-23 (MKKLRASVRSHKKQPANHKRRGK) are enriched in basic residues. Positions 1-38 (MKKLRASVRSHKKQPANHKRRGKCALSSSQAKPSGLDG) are disordered. E105 (proton donor/acceptor) is an active-site residue. The [4Fe-4S] cluster site is built by C261, C268, C271, and C277. The Nudix hydrolase domain occupies 335–467 (PREEYSATCV…AMKKVFRVYE (133 aa)). A Nudix box motif is present at residues 376 to 398 (VTLEPSGQHQHKALLQELQHWSA). Residues 474-516 (CKGSKRPQVCTPSSRKKPSRGQQVLDRFFQRHIPTHKPNSTTQ) form a disordered region.

The protein belongs to the Nth/MutY family. It depends on [4Fe-4S] cluster as a cofactor. Expressed in brain, spleen, heart, liver and kidney.

It is found in the nucleus. Its subcellular location is the mitochondrion. The catalysed reaction is Hydrolyzes free adenine bases from 7,8-dihydro-8-oxoguanine:adenine mismatched double-stranded DNA, leaving an apurinic site.. Involved in oxidative DNA damage repair. Initiates repair of A*oxoG to C*G by removing the inappropriately paired adenine base from the DNA backbone. Possesses both adenine and 2-OH-A DNA glycosylase activities. This Rattus norvegicus (Rat) protein is Adenine DNA glycosylase (Mutyh).